Consider the following 265-residue polypeptide: NAD kinase (265 aa).

The Proton acceptor role is filled by Asp45. NAD(+) is bound by residues 45-46 (DG), 121-122 (NE), Arg147, Asp149, Ala184, and Gln221.

The protein belongs to the NAD kinase family. The cofactor is a divalent metal cation.

The protein resides in the cytoplasm. It catalyses the reaction NAD(+) + ATP = ADP + NADP(+) + H(+). Functionally, involved in the regulation of the intracellular balance of NAD and NADP, and is a key enzyme in the biosynthesis of NADP. Catalyzes specifically the phosphorylation on 2'-hydroxyl of the adenosine moiety of NAD to yield NADP. The sequence is that of NAD kinase from Leuconostoc citreum (strain KM20).